We begin with the raw amino-acid sequence, 379 residues long: Odorant receptor 33b (379 aa).

The Cytoplasmic segment spans residues 1 to 37 (MDLKPRVIRSEDIYRTYWLYWHLLGLESNFFLNRLLD). The chain crosses the membrane as a helical span at residues 38 to 58 (LVITIFVTIWYPIHLILGLFM). The Extracellular segment spans residues 59–64 (ERSLGD). The chain crosses the membrane as a helical span at residues 65–85 (VCKGLPITAACFFASFKFICF). Topologically, residues 86-129 (RFKLSEIKEIEILFKELDQRALSREECEFFNQNTRREANFIWKS) are cytoplasmic. A helical membrane pass occupies residues 130–150 (FIVAYGLSNISAIASVLFGGG). The Extracellular portion of the chain corresponds to 151–165 (HKLLYPAWFPYDVQA). A helical transmembrane segment spans residues 166–186 (TELIFWLSVTYQIAGVSLAIL). Topologically, residues 187-256 (QNLANDSYPP…LLRSTMNISQ (70 aa)) are cytoplasmic. The helical transmembrane segment at 257–277 (LGQFISSGVNISITLVNILFF) threads the bilayer. Topologically, residues 278–281 (ADNN) are extracellular. Residues 282-302 (FAITYYGVYFLSMVLELFPCC) traverse the membrane as a helical segment. The Cytoplasmic segment spans residues 303–355 (YYGTLISVEMNQLTYAIYSSNWMSMNRSYSRILLIFMQLTLAEVQIKAGGMIG). A helical transmembrane segment spans residues 356 to 376 (IGMNAFFATVRLAYSFFTLAM). The Extracellular portion of the chain corresponds to 377-379 (SLR).

The protein belongs to the insect chemoreceptor superfamily. Heteromeric odorant receptor channel (TC 1.A.69) family. Or2a subfamily. As to quaternary structure, interacts with Orco. Complexes exist early in the endomembrane system in olfactory sensory neurons (OSNs), coupling these complexes to the conserved ciliary trafficking pathway. Expressed in 15 cells in the antenna but not the maxillary palp.

It is found in the cell membrane. Functionally, odorant receptor which mediates acceptance or avoidance behavior, depending on its substrates. The odorant receptor repertoire encodes a large collection of odor stimuli that vary widely in identity, intensity, and duration. May form a complex with Orco to form odorant-sensing units, providing sensitive and prolonged odorant signaling and calcium permeability. Involved in the behavioral responses to pentyl acetate and pyrazines. The sequence is that of Odorant receptor 33b (Or33b) from Drosophila melanogaster (Fruit fly).